The sequence spans 438 residues: C4-dicarboxylate transport protein 1 (438 aa).

Transmembrane regions (helical) follow at residues 20–42, 57–77, 90–112, 160–179, 192–214, 229–251, 324–346, and 361–383; these read LYVQ…PSVA, LIKM…IAHI, ALFY…GNLV, VLQV…ALGK, AHAV…FGAM, LIGL…LGLI, LFIA…LLVA, and FITL…AIVF.

Belongs to the dicarboxylate/amino acid:cation symporter (DAACS) (TC 2.A.23) family.

The protein resides in the cell inner membrane. Functionally, responsible for the transport of dicarboxylates such as succinate, fumarate, and malate from the periplasm across the membrane. This is C4-dicarboxylate transport protein 1 from Bradyrhizobium diazoefficiens (strain JCM 10833 / BCRC 13528 / IAM 13628 / NBRC 14792 / USDA 110).